A 91-amino-acid polypeptide reads, in one-letter code: Large ribosomal subunit protein eL34 (91 aa).

It belongs to the eukaryotic ribosomal protein eL34 family.

This Thermofilum pendens (strain DSM 2475 / Hrk 5) protein is Large ribosomal subunit protein eL34.